A 172-amino-acid polypeptide reads, in one-letter code: Adenine phosphoribosyltransferase (172 aa).

This sequence belongs to the purine/pyrimidine phosphoribosyltransferase family. Homodimer.

The protein resides in the cytoplasm. The catalysed reaction is AMP + diphosphate = 5-phospho-alpha-D-ribose 1-diphosphate + adenine. The protein operates within purine metabolism; AMP biosynthesis via salvage pathway; AMP from adenine: step 1/1. Functionally, catalyzes a salvage reaction resulting in the formation of AMP, that is energically less costly than de novo synthesis. The chain is Adenine phosphoribosyltransferase from Synechococcus sp. (strain CC9605).